A 1396-amino-acid polypeptide reads, in one-letter code: ABC-type transporter cicA (1396 aa).

The disordered stretch occupies residues 1–40 (MRLSSEAKIAESGGQPPTAGSRSETGSESTEAESADPKAQ). Residues 18–29 (TAGSRSETGSES) are compositionally biased toward low complexity. Helical transmembrane passes span 142 to 162 (FLLG…APYL), 191 to 211 (GFVV…NQFL), and 300 to 320 (MFHI…LLLV). Residues 143–466 (LLGGFCHLIS…LPLVLGQITD (324 aa)) form the ABC transmembrane type-1 1 domain. Asn321 carries an N-linked (GlcNAc...) asparagine glycan. The next 3 helical transmembrane spans lie at 324–344 (YSAL…TYAV), 409–429 (ILCV…ITYA), and 440–460 (IFSS…LPLV). Residues 510–533 (AADKEAEKVEKKANPRRTEPKSEA) show a composition bias toward basic and acidic residues. Residues 510–543 (AADKEAEKVEKKANPRRTEPKSEAPTDSAESDEP) are disordered. An ABC transporter 1 domain is found at 525–751 (RRTEPKSEAP…NDLFKQLMST (227 aa)). 563-570 (GTVGSGKS) contributes to the ATP binding site. An N-linked (GlcNAc...) asparagine glycan is attached at Asn604. The segment at 751 to 787 (TASQDSKEDEEEATEVVEEEAEKQAQQEPTKPAAALM) is disordered. Positions 757–771 (KEDEEEATEVVEEEA) are enriched in acidic residues. 2 consecutive transmembrane segments (helical) span residues 816–836 (LAIL…NLWL) and 852–872 (YIGI…IFST). One can recognise an ABC transmembrane type-1 2 domain in the interval 816 to 1093 (LAILFLLAFA…TVRQLAEVEN (278 aa)). Asn880 carries N-linked (GlcNAc...) asparagine glycosylation. 4 consecutive transmembrane segments (helical) span residues 930-947 (MYAI…LIIV), 951-970 (YFAI…SNYY), 1036-1056 (LSVR…VLVV), and 1065-1085 (SISG…QFTV). 3 N-linked (GlcNAc...) asparagine glycosylation sites follow: Asn1096, Asn1150, and Asn1154. Residues 1131 to 1380 (ITFDNVAMRY…EDGIFRAMCE (250 aa)) form the ABC transporter 2 domain. Residue 1165–1172 (GRTGAGKS) participates in ATP binding.

Belongs to the ABC transporter superfamily. ABCC family. Conjugate transporter (TC 3.A.1.208) subfamily.

It localises to the cell membrane. Functionally, ABC-type transporter; part of the gene cluster that mediates the biosynthesis of cichorine, a phytotoxin active against knapweed, corn, and soybeans. CicA is probably involved in the secretion of cichorine. This is ABC-type transporter cicA from Emericella nidulans (strain FGSC A4 / ATCC 38163 / CBS 112.46 / NRRL 194 / M139) (Aspergillus nidulans).